Reading from the N-terminus, the 477-residue chain is Octopamine receptor (477 aa).

Topologically, residues 1 to 55 (MGQAATHVDANYTLINYTEEVIEDDRDACAVADDPKYPSSFGITLAVPEWEAICT) are extracellular. N-linked (GlcNAc...) asparagine glycosylation is found at Asn11 and Asn16. A helical transmembrane segment spans residues 56–78 (AIVLTLIIISTIVGNILVILSVF). Topologically, residues 79–88 (TYKPLRIVQN) are cytoplasmic. A helical membrane pass occupies residues 89 to 110 (FFIVSLAVADLTVAILVLPLNV). Residues 111–127 (AYSILGQWVFGIYVCKM) are Extracellular-facing. A helical transmembrane segment spans residues 128-148 (WLTCDIMCCTSSILNLCAIAL). Topologically, residues 149-168 (DRYWAITDPINYAQKRTLER) are cytoplasmic. A helical membrane pass occupies residues 169–191 (VLLMIGVVWVLSLIISSPPLLGW). At 192–216 (NDWPDVFEPDTPCRLTSQPGFVIFS) the chain is on the extracellular side. Residues 217–238 (SSGSFYIPLVIMTVVYFEIYLA) traverse the membrane as a helical segment. The Cytoplasmic segment spans residues 239–405 (TKKRLRDRAK…LTRERRAART (167 aa)). Disordered stretches follow at residues 256-317 (SSGQ…SKDD) and 334-358 (VTDMGENLENRNTSSESNSKETHED). Basic and acidic residues-rich tracts occupy residues 263–272 (NNKDDHHDQD) and 279–295 (NHNEHQGVTRLVSDNEK). Positions 296–312 (KKRTRKLTPKKKPKRKY) are enriched in basic residues. Residues 406 to 427 (LGIIMGVFVVCWLPFFVIYLVI) traverse the membrane as a helical segment. The Extracellular segment spans residues 428-439 (PFCASCCLSNKF). A helical membrane pass occupies residues 440 to 460 (INFITWLGYCNSALNPLIYTI). Topologically, residues 461–477 (FNMDFRRAFKKLLCMKP) are cytoplasmic.

This sequence belongs to the G-protein coupled receptor 1 family.

Its subcellular location is the cell membrane. Its function is as follows. Receptor for octopamine. Octopamine (OA) is a neurotransmitter, neurohormone, and neuromodulator in invertebrates. The activity of this receptor is mediated by G proteins which activate adenylyl cyclase. This Heliothis virescens (Tobacco budworm moth) protein is Octopamine receptor.